Here is a 571-residue protein sequence, read N- to C-terminus: DDB1- and CUL4-associated factor 11 homolog (571 aa).

Positions R51–T75 are disordered. The segment covering S60–E69 has biased composition (acidic residues). WD repeat units lie at residues R162 to R201, R266 to T305, A309 to V349, G357 to G396, G435 to R479, and G482 to I521.

The protein belongs to the WD repeat LEC14B family.

Involved in regulation of lifespan. Required for dopaminergic CEP neuron degeneration in response to Mn(2+). Inhibits the skn-1-mediated up-regulation of tatn-1. This chain is DDB1- and CUL4-associated factor 11 homolog, found in Caenorhabditis elegans.